The following is an 86-amino-acid chain: Neurotoxin LmNaTx1 (86 aa).

A signal peptide spans Met-1–Ser-18. In terms of domain architecture, LCN-type CS-alpha/beta spans Lys-19–Gly-85. 4 cysteine pairs are disulfide-bonded: Cys-33-Cys-84, Cys-37-Cys-58, Cys-44-Cys-65, and Cys-48-Cys-67. Cys-84 carries the post-translational modification Cysteine amide.

Belongs to the long (4 C-C) scorpion toxin superfamily. Sodium channel inhibitor family. Beta subfamily. As to expression, expressed by the venom gland.

The protein resides in the secreted. Its function is as follows. Binds voltage-independently at site-4 of sodium channels (Nav) and shift the voltage of activation toward more negative potentials thereby affecting sodium channel activation and promoting spontaneous and repetitive firing. This chain is Neurotoxin LmNaTx1, found in Lychas mucronatus (Chinese swimming scorpion).